The sequence spans 116 residues: MRRINTIMQGKTNGGNGPESGTVVVTRTQPKTRKPSLYRVLLLNDDYTPMEFVVHVLQRFFQKNLDDATRIMLHVHNHGVGECGVFTYEVAETKVSQVMDFARQNQHPLQCVMEKK.

Polar residues predominate over residues Met-1 to Lys-11. The disordered stretch occupies residues Met-1 to Val-23.

This sequence belongs to the ClpS family. In terms of assembly, binds to the N-terminal domain of the chaperone ClpA.

Its function is as follows. Involved in the modulation of the specificity of the ClpAP-mediated ATP-dependent protein degradation. This Brucella abortus (strain S19) protein is ATP-dependent Clp protease adapter protein ClpS.